A 232-amino-acid polypeptide reads, in one-letter code: Flagellar L-ring protein (232 aa).

An N-terminal signal peptide occupies residues 1–21 (MQKYALHAYPVMALMVATLTG). The N-palmitoyl cysteine moiety is linked to residue Cys22. Residue Cys22 is the site of S-diacylglycerol cysteine attachment.

It belongs to the FlgH family. In terms of assembly, the basal body constitutes a major portion of the flagellar organelle and consists of four rings (L,P,S, and M) mounted on a central rod.

The protein resides in the cell outer membrane. Its subcellular location is the bacterial flagellum basal body. In terms of biological role, assembles around the rod to form the L-ring and probably protects the motor/basal body from shearing forces during rotation. This chain is Flagellar L-ring protein, found in Salmonella gallinarum (strain 287/91 / NCTC 13346).